The chain runs to 184 residues: Protein Syd (184 aa).

The protein belongs to the Syd family.

The protein resides in the cell inner membrane. Functionally, interacts with the SecY protein in vivo. May bind preferentially to an uncomplexed state of SecY, thus functioning either as a chelating agent for excess SecY in the cell or as a regulatory factor that negatively controls the translocase function. The sequence is that of Protein Syd from Photorhabdus laumondii subsp. laumondii (strain DSM 15139 / CIP 105565 / TT01) (Photorhabdus luminescens subsp. laumondii).